Reading from the N-terminus, the 115-residue chain is Large ribosomal subunit protein bL20c (115 aa).

This sequence belongs to the bacterial ribosomal protein bL20 family.

It localises to the plastid. The protein resides in the chloroplast. Functionally, binds directly to 23S ribosomal RNA and is necessary for the in vitro assembly process of the 50S ribosomal subunit. It is not involved in the protein synthesizing functions of that subunit. In Pyropia yezoensis (Susabi-nori), this protein is Large ribosomal subunit protein bL20c.